The primary structure comprises 93 residues: Large ribosomal subunit protein uL23cz/uL23cy (93 aa).

This sequence belongs to the universal ribosomal protein uL23 family. As to quaternary structure, part of the 50S ribosomal subunit.

The protein localises to the plastid. The protein resides in the chloroplast. Functionally, binds to 23S rRNA. This Cucumis sativus (Cucumber) protein is Large ribosomal subunit protein uL23cz/uL23cy (rpl23-A).